The chain runs to 465 residues: COP9 signalosome complex subunit 5 (465 aa).

One can recognise an MPN domain in the interval 74–216 (VLLSKLACSK…IGSFRTYQDQ (143 aa)). Residues His-162, His-164, and Asp-175 each contribute to the Zn(2+) site. The JAMM motif signature appears at 162–175 (HSHPGYDCWLSNID). Residues 364–386 (SSIHTQMNNQNNQQERNSPKRPH) are disordered.

The protein belongs to the peptidase M67A family. CSN5 subfamily. Component of the COP9 signalosome (CSN) complex.

The protein localises to the cytoplasm. It localises to the nucleus. Functionally, catalytic Component of the COP9 signalosome (CSN) complex that acts as an regulator of the ubiquitin (Ubl) conjugation pathway by mediating the deneddylation of the cullin subunit of SCF-type E3 ubiquitin-protein ligase complexes. The polypeptide is COP9 signalosome complex subunit 5 (RRI1) (Candida glabrata (strain ATCC 2001 / BCRC 20586 / JCM 3761 / NBRC 0622 / NRRL Y-65 / CBS 138) (Yeast)).